The primary structure comprises 399 residues: Maltose excess protein 1-like, chloroplastic (399 aa).

A chloroplast-targeting transit peptide spans M1–V67. 9 helical membrane passes run F93–A113, A123–L143, A154–M174, L180–F202, I217–I237, P238–A258, I268–V288, A306–I326, and F361–I381.

The protein resides in the plastid. The protein localises to the chloroplast inner membrane. In terms of biological role, probable maltose transporter. Essential for the conversion of starch to sucrose in leaves at night, probably via the export of maltose from the chloroplast. This Oryza sativa subsp. japonica (Rice) protein is Maltose excess protein 1-like, chloroplastic.